A 296-amino-acid polypeptide reads, in one-letter code: Ethanolamine ammonia-lyase small subunit (296 aa).

Residues valine 209 and glutamate 230 each contribute to the adenosylcob(III)alamin site.

The protein belongs to the EutC family. In terms of assembly, the basic unit is a heterodimer which dimerizes to form tetramers. The heterotetramers trimerize; 6 large subunits form a core ring with 6 small subunits projecting outwards. Requires adenosylcob(III)alamin as cofactor.

It is found in the bacterial microcompartment. It carries out the reaction ethanolamine = acetaldehyde + NH4(+). Its pathway is amine and polyamine degradation; ethanolamine degradation. Catalyzes the deamination of various vicinal amino-alcohols to oxo compounds. Allows this organism to utilize ethanolamine as the sole source of nitrogen and carbon in the presence of external vitamin B12. This chain is Ethanolamine ammonia-lyase small subunit, found in Lachnoclostridium phytofermentans (strain ATCC 700394 / DSM 18823 / ISDg) (Clostridium phytofermentans).